Reading from the N-terminus, the 493-residue chain is Dipeptide permease D (493 aa).

A run of 13 helical transmembrane segments spans residues 14–34 (VVAL…LLIL), 49–69 (ELFS…GYLA), 91–111 (LVLG…AIIV), 138–158 (GGFS…PIAC), 167–187 (WAMG…IFLC), 212–232 (NWGW…VLFW), 235–255 (WSVY…AKIY), 267–287 (LGLI…AQQG), 312–332 (MFQS…AWLV), 344–364 (IWGK…ILTL), 379–399 (LMVL…PVAM), 413–433 (VLTG…AGVI), and 458–478 (VFEQ…LIWL).

Belongs to the major facilitator superfamily. Proton-dependent oligopeptide transporter (POT/PTR) (TC 2.A.17) family. DtpD subfamily.

The protein resides in the cell inner membrane. In terms of biological role, probable proton-dependent permease that transports dipeptides. The polypeptide is Dipeptide permease D (Salmonella paratyphi C (strain RKS4594)).